The following is a 739-amino-acid chain: Poly(A) polymerase alpha (739 aa).

Low complexity predominate over residues 1 to 17 (MPFPVTTQGSQQTQPPQ). The tract at residues 1–23 (MPFPVTTQGSQQTQPPQKHYGIT) is disordered. Residues Ser10 and Ser24 each carry the phosphoserine modification. Residues 100 to 102 (FGS), Thr109, 113 to 115 (DID), Asp167, Lys228, Tyr237, and 246 to 247 (GV) contribute to the ATP site. Mg(2+) is bound by residues Asp113, Asp115, and Asp167. Glycyl lysine isopeptide (Lys-Gly) (interchain with G-Cter in SUMO) cross-links involve residues Lys444, Lys445, Lys506, and Lys507. The Nuclear localization signal 1 signature appears at 490-507 (RKQLHQLLPSHVLQKKKK). Disordered regions lie at residues 501-565 (VLQK…AVTA) and 580-700 (QINS…TIQT). The interval 508–643 (HSTEGVKLTP…AKIPNPIVGV (136 aa)) is ser/Thr-rich. Residues 518–534 (LNDSSLDLSMDSDNSMS) show a composition bias toward low complexity. The span at 535 to 557 (VPSPTSAMKTSPLNSSGSSQGRN) shows a compositional bias: polar residues. Residue Ser537 is modified to Phosphoserine; by MAPK. Ser558 bears the Phosphoserine mark. Residues 583-594 (SSESSGGTSSES) are compositionally biased toward low complexity. The span at 595 to 604 (IPQTATQPAI) shows a compositional bias: polar residues. Residues 611 to 620 (TVSRVVSSTR) show a composition bias toward low complexity. N6-acetyllysine is present on residues Lys635 and Lys644. The Nuclear localization signal 2 motif lies at 644–659 (KRTSSPHKEESPKKTK). 2 stretches are compositionally biased toward basic and acidic residues: residues 649–660 (PHKEESPKKTKT) and 676–686 (GHDKTETKEQL). The required for interaction with NUDT21 stretch occupies residues 671–739 (CLALSGHDKT…KNSIKLRLNR (69 aa)). The segment covering 688-700 (TETSTTQSETIQT) has biased composition (low complexity). Lys730 is subject to N6-acetyllysine; alternate. Lys730 participates in a covalent cross-link: Glycyl lysine isopeptide (Lys-Gly) (interchain with G-Cter in SUMO); alternate. At Ser732 the chain carries Phosphoserine. Lys734 carries the post-translational modification N6-acetyllysine; alternate. Lys734 participates in a covalent cross-link: Glycyl lysine isopeptide (Lys-Gly) (interchain with G-Cter in SUMO); alternate.

It belongs to the poly(A) polymerase family. Monomer. Found in a complex with CPSF1, FIP1L1 and PAPOLA. Interacts with AHCYL1 and FIP1L1; the interaction with AHCYL1 seems to increase interaction with FIP1L1. Interacts with NUDT21; the interaction is diminished by acetylation. Interacts with KPNB1; the interaction promotes PAP nuclear import and is inhibited by acetylation of PAP. It depends on Mg(2+) as a cofactor. Requires Mn(2+) as cofactor. Post-translationally, polysumoylated. Varying sumoylation depending on tissue- and cell-type. Highly sumoylated in bladder and NIH 3T3 cells. Sumoylation is required for nuclear localization and enhances PAP stability. Desumoylated by SENP1. Inhibits polymerase activity. Hyperphosphorylation on multiple CDK2 consensus and non-consensus sites in the C-terminal Ser/Thr-rich region represses PAP activity in late M-phase. Phosphorylation/dephosphorylation may regulate the interaction between PAP and CPSF. In terms of processing, acetylated in the C-terminus. Acetylation decreases interaction with NUDT21 and KPNB1, and inhibits nuclear localization through inhibiting binding to the importin alpha/beta complex.

The protein localises to the nucleus. The enzyme catalyses RNA(n) + ATP = RNA(n)-3'-adenine ribonucleotide + diphosphate. Functionally, polymerase that creates the 3'-poly(A) tail of mRNA's. Also required for the endoribonucleolytic cleavage reaction at some polyadenylation sites. May acquire specificity through interaction with a cleavage and polyadenylation specificity factor (CPSF) at its C-terminus. The polypeptide is Poly(A) polymerase alpha (PAPOLA) (Bos taurus (Bovine)).